The following is a 639-amino-acid chain: Chaperone protein DnaK (639 aa).

T196 carries the post-translational modification Phosphothreonine; by autocatalysis. Positions 592–639 (ASSLYQTPDAGAPGASGPSAGGEPETGKKGGDGEVQNAEYEVIDGNDK) are disordered. Residues 601-613 (AGAPGASGPSAGG) are compositionally biased toward low complexity.

The protein belongs to the heat shock protein 70 family.

In terms of biological role, acts as a chaperone. The chain is Chaperone protein DnaK from Chlorobium limicola (strain DSM 245 / NBRC 103803 / 6330).